The primary structure comprises 746 residues: Transcription factor pbcR (746 aa).

The span at 1 to 12 shows a compositional bias: polar residues; sequence MYPWSSTGTSPF. Residues 1–40 form a disordered region; the sequence is MYPWSSTGTSPFSHPDNEGAESGDMSMGEEQQQPHQRRQK. The zn(2)-C6 fungal-type DNA-binding region spans 47–76; sequence CQSCRASKVRCDQPNPGMPCLRCQKSGKPC. Positions 109-131 are disordered; it reads ELQDSAGDGETAHSTALRSPSQL. The span at 120-131 shows a compositional bias: polar residues; it reads AHSTALRSPSQL.

It localises to the nucleus. Functionally, transcription factor; part of the gene cluster that mediates the biosynthesis of the diterpene ent-pimara-8(14),15-diene (PD). Acts as a positive regulator for the cluster gene. Down-regulates the expression of the penicillin gene cluster, two putative polyketide clusters, and one putative nonribosomal peptide cluster. This chain is Transcription factor pbcR, found in Emericella nidulans (strain FGSC A4 / ATCC 38163 / CBS 112.46 / NRRL 194 / M139) (Aspergillus nidulans).